The primary structure comprises 48 residues: Palustrin-3a (48 aa).

C43 and C48 are disulfide-bonded.

As to expression, expressed by the skin glands.

The protein resides in the secreted. In terms of biological role, antimicrobial activity against Gram-negative bacterium E.coli. The sequence is that of Palustrin-3a from Lithobates palustris (Pickerel frog).